A 194-amino-acid chain; its full sequence is Xanthine phosphoribosyltransferase (194 aa).

Xanthine is bound by residues Leu-20 and Asn-27. 5-phospho-alpha-D-ribose 1-diphosphate is bound at residue 128–132; the sequence is ANGCA. Lys-156 lines the xanthine pocket.

The protein belongs to the purine/pyrimidine phosphoribosyltransferase family. Xpt subfamily. Homodimer.

The protein resides in the cytoplasm. The enzyme catalyses XMP + diphosphate = xanthine + 5-phospho-alpha-D-ribose 1-diphosphate. It participates in purine metabolism; XMP biosynthesis via salvage pathway; XMP from xanthine: step 1/1. In terms of biological role, converts the preformed base xanthine, a product of nucleic acid breakdown, to xanthosine 5'-monophosphate (XMP), so it can be reused for RNA or DNA synthesis. The sequence is that of Xanthine phosphoribosyltransferase from Lachnoclostridium phytofermentans (strain ATCC 700394 / DSM 18823 / ISDg) (Clostridium phytofermentans).